The chain runs to 141 residues: Anthrone oxygenase ptaC (141 aa).

The first 19 residues, 1 to 19 (MMGLPLMAVPMLLDTGADP), serve as a signal peptide directing secretion. Transmembrane regions (helical) follow at residues 33 to 53 (GVRT…WTII) and 64 to 84 (ILAV…YVLA).

It belongs to the anthrone oxygenase family.

The protein localises to the membrane. It participates in secondary metabolite biosynthesis. Functionally, anthrone oxygenase; part of the gene cluster that mediates the biosynthesis of pestheic acid, a diphenyl ether which is a biosynthetic precursor of the unique chloropupukeananes. The biosynthesis initiates from condensation of acetate and malonate units catalyzed by the non-reducing PKS ptaA. As the ptaA protein is TE/CLC domain-deficient, hydrolysis and Claisen cyclization of the polyketide could be catalyzed by ptaB containing a beta-lactamase domain. The ptaB protein might hydrolyze the thioester bond between the ACP of ptaA and the intermediate to release atrochrysone carboxylic acid, which is spontaneously dehydrated to form endocrocin anthrone. Endocrocin anthrone is then converted to endocrocin, catalyzed by the anthrone oxygenase ptaC. Spontaneous decarboxylation of endocrocin occurs to generate emodin. An O-methyltransferase (ptaH or ptaI) could methylate emodin to form physcion. PtaJ could then catalyze the oxidative cleavage of physcion, and rotation of the intermediate could then afford desmethylisosulochrin. PtaF, a putative NADH-dependent oxidoreductase, might also participate in the oxidative cleavage step. Desmethylisosulochrin is then transformed by another O-methyltransferase (ptaH or ptaI) to form isosulochrin. Chlorination of isosulochrin by ptaM in the cyclohexadienone B ring then produces chloroisosulochrin. PtaE is responsible for the oxidative coupling reactions of both benzophenones isosulochrin and chloroisosulochrin to RES-1214-1 and pestheic acid respectively, regardless of chlorination. This chain is Anthrone oxygenase ptaC, found in Pestalotiopsis fici (strain W106-1 / CGMCC3.15140).